A 728-amino-acid polypeptide reads, in one-letter code: Propionyl-CoA carboxylase alpha chain, mitochondrial (728 aa).

Residues 1–52 (MAGFWVGTAPLVAAGRRGRWPPQQLMLSAALRTLKHVLYYSRQCLMVSRNLG) constitute a mitochondrion transit peptide. A Biotin carboxylation domain is found at 62–509 (TFDKILVANR…STKFLSDVYP (448 aa)). At K65 the chain carries N6-acetyllysine; alternate. Position 65 is an N6-succinyllysine; alternate (K65). K119 bears the N6-succinyllysine mark. K150 is subject to N6-acetyllysine; alternate. The residue at position 150 (K150) is an N6-succinyllysine; alternate. Residue K177 coordinates ATP. In terms of domain architecture, ATP-grasp spans 181-378 (KLLAKKAEVN…LVQEMIRVAK (198 aa)). The residue at position 200 (K200) is an N6-acetyllysine; alternate. At K200 the chain carries N6-succinyllysine; alternate. ATP contacts are provided by residues 209 to 270 (AREI…PRHI), E261, and N296. S252 carries the post-translational modification Phosphoserine. Residue K262 is modified to N6-succinyllysine. K328 is subject to N6-acetyllysine; alternate. K328 carries the post-translational modification N6-succinyllysine; alternate. Mg(2+) contacts are provided by E336, E349, and N351. 3 residues coordinate Mn(2+): E336, E349, and N351. The active site involves E349. N6-succinyllysine occurs at positions 385 and 407. F409 contacts biotin. K496 is subject to N6-acetyllysine. K502, K513, and K648 each carry N6-succinyllysine. One can recognise a Biotinyl-binding domain in the interval 653–728 (KVTEDTSSVL…GEGDLLVELE (76 aa)). The residue at position 694 (K694) is an N6-biotinyllysine; by HLCS.

As to quaternary structure, the holoenzyme is a dodecamer composed of 6 PCCA/alpha subunits and 6 PCCB/beta subunits. Interacts (via the biotin carboxylation domain) with SIRT4. Interacts with SIRT3 and SIRT5. The cofactor is Mg(2+). Mn(2+) is required as a cofactor. It depends on biotin as a cofactor. In terms of processing, acetylated. The biotin cofactor is covalently attached to the C-terminal biotinyl-binding domain and is required for the catalytic activity. Biotinylation is catalyzed by HLCS.

It localises to the mitochondrion matrix. It catalyses the reaction propanoyl-CoA + hydrogencarbonate + ATP = (S)-methylmalonyl-CoA + ADP + phosphate + H(+). It carries out the reaction butanoyl-CoA + hydrogencarbonate + ATP = (2S)-ethylmalonyl-CoA + ADP + phosphate + H(+). The protein operates within metabolic intermediate metabolism; propanoyl-CoA degradation; succinyl-CoA from propanoyl-CoA: step 1/3. This is one of the 2 subunits of the biotin-dependent propionyl-CoA carboxylase (PCC), a mitochondrial enzyme involved in the catabolism of odd chain fatty acids, branched-chain amino acids isoleucine, threonine, methionine, and valine and other metabolites. Propionyl-CoA carboxylase catalyzes the carboxylation of propionyl-CoA/propanoyl-CoA to D-methylmalonyl-CoA/(S)-methylmalonyl-CoA. Within the holoenzyme, the alpha subunit catalyzes the ATP-dependent carboxylation of the biotin carried by the biotin carboxyl carrier (BCC) domain, while the beta subunit then transfers the carboxyl group from carboxylated biotin to propionyl-CoA. Propionyl-CoA carboxylase also significantly acts on butyryl-CoA/butanoyl-CoA, which is converted to ethylmalonyl-CoA/(2S)-ethylmalonyl-CoA at a much lower rate. Other alternative minor substrates include (2E)-butenoyl-CoA/crotonoyl-CoA. In Homo sapiens (Human), this protein is Propionyl-CoA carboxylase alpha chain, mitochondrial.